The primary structure comprises 147 residues: Myoglobin (147 aa).

In terms of domain architecture, Globin spans 2–141; it reads HDAELVLKCW…VIGDIDTYYK (140 aa). Position 60 (H60) interacts with nitrite. Residue H60 participates in O2 binding. H89 contacts heme b.

It belongs to the globin family. As to quaternary structure, monomeric.

The protein localises to the cytoplasm. It localises to the sarcoplasm. It catalyses the reaction Fe(III)-heme b-[protein] + nitric oxide + H2O = Fe(II)-heme b-[protein] + nitrite + 2 H(+). The catalysed reaction is H2O2 + AH2 = A + 2 H2O. Its function is as follows. Monomeric heme protein which primary function is to store oxygen and facilitate its diffusion within muscle tissues. Reversibly binds oxygen through a pentacoordinated heme iron and enables its timely and efficient release as needed during periods of heightened demand. Depending on the oxidative conditions of tissues and cells, and in addition to its ability to bind oxygen, it also has a nitrite reductase activity whereby it regulates the production of bioactive nitric oxide. Under stress conditions, like hypoxia and anoxia, it also protects cells against reactive oxygen species thanks to its pseudoperoxidase activity. This chain is Myoglobin (mb), found in Cyprinus carpio (Common carp).